The sequence spans 142 residues: Hemoglobin subunit alpha (142 aa).

Residues 2–142 (VLSAADKNNV…VSTVLTSKYR (141 aa)) form the Globin domain. At Ser4 the chain carries Phosphoserine. N6-succinyllysine occurs at positions 8 and 12. Lys17 bears the N6-acetyllysine; alternate mark. Position 17 is an N6-succinyllysine; alternate (Lys17). Position 25 is a phosphotyrosine (Tyr25). A Phosphoserine modification is found at Ser36. Lys41 is modified (N6-succinyllysine). A Phosphoserine modification is found at Ser50. His59 provides a ligand contact to O2. His88 lines the heme b pocket. Thr109 carries the phosphothreonine modification. 2 positions are modified to phosphoserine: Ser125 and Ser132. Phosphothreonine occurs at positions 135 and 138. Ser139 is subject to Phosphoserine.

Belongs to the globin family. Heterotetramer of two alpha chains and two beta chains. In terms of tissue distribution, red blood cells.

In terms of biological role, involved in oxygen transport from the lung to the various peripheral tissues. Functionally, hemopressin acts as an antagonist peptide of the cannabinoid receptor CNR1. Hemopressin-binding efficiently blocks cannabinoid receptor CNR1 and subsequent signaling. The sequence is that of Hemoglobin subunit alpha (HBA) from Cavia porcellus (Guinea pig).